The primary structure comprises 372 residues: Cyclic GMP-AMP synthase-like receptor (372 aa).

T68 lines the GTP pocket. ATP contacts are provided by residues S70 and 82–84 (EFD). Residues E82, D84, and D190 each coordinate Mg(2+). GTP-binding positions include D190 and 236-243 (LVCAPYWE). Residues 240-243 (PYWE), K261, and 274-278 (SYTIK) contribute to the ATP site.

Belongs to the mab-21 family. Requires Mg(2+) as cofactor. Mn(2+) is required as a cofactor.

The catalysed reaction is GTP + ATP = 3',2'-cGAMP + 2 diphosphate. It catalyses the reaction GTP + ATP = pppA(2'-5')pG + diphosphate. It carries out the reaction pppA(2'-5')pG = 3',2'-cGAMP + diphosphate. The enzyme activity is specifically activated by double-stranded RNA (dsRNA). Its function is as follows. Nucleotidyltransferase that catalyzes the formation of cyclic GMP-AMP (3',2'-cGAMP) from ATP and GTP and plays a key role in innate immunity. Synthesizes 3',2'-cGAMP in a two-step reaction through production of the linear intermediate pppA(2'-5')pG. Acts as a key sensor of double-stranded RNA (dsRNA), the presence of dsRNA in the cytoplasm being a danger signal that triggers the immune responses. Directly binds dsRNA longer than 15 bp, activating the nucleotidyltransferase activity, leading to synthesis of 3',2'-cGAMP, a second messenger that binds to and activates Sting, thereby triggering the antiviral immune response via activation of the NF-kappa-B transcription factor Rel (Relish). The polypeptide is Cyclic GMP-AMP synthase-like receptor (Drosophila eugracilis (Fruit fly)).